The primary structure comprises 1941 residues: Diacylglycerol kinase eta (1941 aa).

Residues 93 to 186 (SIIKEGYLLK…WLGSLKAATA (94 aa)) enclose the PH domain. 2 Phorbol-ester/DAG-type zinc fingers span residues 206–256 (HHHW…IANC) and 279–330 (PHQW…AIAC). Residues 361–497 (GNFSPLLVFV…DRWSIMVFEK (137 aa)) enclose the DAGKc domain. Disordered regions lie at residues 1030–1068 (TTTLCSEHMGPPKPPRKKSMSALSKSQIHPRRRNSSPPR), 1132–1164 (CNSNNNSNNNSNSNSNNNNHNDGNSNDEPETPT), 1215–1257 (LESA…PSSS), and 1276–1295 (RRHSSHAPSLAVREYDKDKD). The segment covering 1133–1155 (NSNNNSNNNSNSNSNNNNHNDGN) has biased composition (low complexity). The SAM domain maps to 1878 to 1941 (WSVNEVVTWL…LQAIKDLSEN (64 aa)).

Belongs to the eukaryotic diacylglycerol kinase family.

The protein resides in the cytoplasm. The catalysed reaction is a 1,2-diacyl-sn-glycerol + ATP = a 1,2-diacyl-sn-glycero-3-phosphate + ADP + H(+). Phosphorylates diacylglycerol (DAG) to generate phosphatidic acid (PA). This is Diacylglycerol kinase eta from Drosophila grimshawi (Hawaiian fruit fly).